A 147-amino-acid polypeptide reads, in one-letter code: UPF0306 protein YE0465 (147 aa).

The protein belongs to the UPF0306 family.

The sequence is that of UPF0306 protein YE0465 from Yersinia enterocolitica serotype O:8 / biotype 1B (strain NCTC 13174 / 8081).